A 498-amino-acid polypeptide reads, in one-letter code: Putative ABC transporter ATP-binding protein MM_2387 (498 aa).

2 consecutive ABC transporter domains span residues Ile-2–Ser-242 and Ile-258–Lys-490. Residues Gly-36–Thr-43 and Gly-290–Thr-297 each bind ATP.

The protein belongs to the ABC transporter superfamily.

The protein resides in the cell membrane. Functionally, probably part of an ABC transporter complex. Responsible for energy coupling to the transport system. This Methanosarcina mazei (strain ATCC BAA-159 / DSM 3647 / Goe1 / Go1 / JCM 11833 / OCM 88) (Methanosarcina frisia) protein is Putative ABC transporter ATP-binding protein MM_2387.